A 352-amino-acid chain; its full sequence is Putative formin-like protein 15b (352 aa).

Positions 1-350 constitute an FH2 domain; that stretch reads MTLFNFIKLF…KDAKEAEMEK (350 aa).

It belongs to the formin-like family. Class-II subfamily.

The chain is Putative formin-like protein 15b (FH15B) from Arabidopsis thaliana (Mouse-ear cress).